The following is a 262-amino-acid chain: tRNA pseudouridine synthase A (262 aa).

The active-site Nucleophile is Asp-54. Tyr-113 contributes to the substrate binding site.

The protein belongs to the tRNA pseudouridine synthase TruA family. In terms of assembly, homodimer.

It carries out the reaction uridine(38/39/40) in tRNA = pseudouridine(38/39/40) in tRNA. Its function is as follows. Formation of pseudouridine at positions 38, 39 and 40 in the anticodon stem and loop of transfer RNAs. In Lactobacillus delbrueckii subsp. bulgaricus (strain ATCC BAA-365 / Lb-18), this protein is tRNA pseudouridine synthase A.